A 348-amino-acid polypeptide reads, in one-letter code: Protein RecA (348 aa).

Residue 64-71 (GPESSGKT) coordinates ATP. The span at 325 to 335 (YEIDGSNKEPL) shows a compositional bias: basic and acidic residues. Residues 325–348 (YEIDGSNKEPLDEGEETLSLLDDE) are disordered. Positions 336-348 (DEGEETLSLLDDE) are enriched in acidic residues.

Belongs to the RecA family.

The protein localises to the cytoplasm. Its function is as follows. Can catalyze the hydrolysis of ATP in the presence of single-stranded DNA, the ATP-dependent uptake of single-stranded DNA by duplex DNA, and the ATP-dependent hybridization of homologous single-stranded DNAs. It interacts with LexA causing its activation and leading to its autocatalytic cleavage. In Listeria monocytogenes serotype 4b (strain CLIP80459), this protein is Protein RecA.